The chain runs to 528 residues: Catalase (528 aa).

The span at 1 to 22 shows a compositional bias: basic and acidic residues; the sequence is MADRREKSADQMKLWKESRANQ. The disordered stretch occupies residues 1–32; it reads MADRREKSADQMKLWKESRANQKPDVLTTGGG. Catalysis depends on residues His75 and Asn148. NADP(+)-binding residues include His194, Ser201, Arg203, Asn213, Lys237, Trp303, His305, and Lys306. Tyr358 contacts heme. The short motif at 525–528 is the Microbody targeting signal; atypical element; that stretch reads KANL.

Belongs to the catalase family. In terms of assembly, homotetramer. The cofactor is heme. NADP(+) serves as cofactor.

The protein resides in the peroxisome matrix. It catalyses the reaction 2 H2O2 = O2 + 2 H2O. In terms of biological role, catalyzes the degradation of hydrogen peroxide (H(2)O(2)) generated by peroxisomal oxidases to water and oxygen, thereby protecting cells from the toxic effects of hydrogen peroxide. This is Catalase (cat) from Glandirana rugosa (Japanese wrinkled frog).